We begin with the raw amino-acid sequence, 213 residues long: UPF0301 protein Aave_0907 (213 aa).

Positions 93–120 (MGPSSGKQAAGEGGAQAEGEGAEESAYA) are disordered.

The protein belongs to the UPF0301 (AlgH) family.

In Paracidovorax citrulli (strain AAC00-1) (Acidovorax citrulli), this protein is UPF0301 protein Aave_0907.